Consider the following 355-residue polypeptide: UDP-3-O-acylglucosamine N-acyltransferase (355 aa).

His-248 serves as the catalytic Proton acceptor.

The protein belongs to the transferase hexapeptide repeat family. LpxD subfamily. In terms of assembly, homotrimer.

It catalyses the reaction a UDP-3-O-[(3R)-3-hydroxyacyl]-alpha-D-glucosamine + a (3R)-hydroxyacyl-[ACP] = a UDP-2-N,3-O-bis[(3R)-3-hydroxyacyl]-alpha-D-glucosamine + holo-[ACP] + H(+). The protein operates within bacterial outer membrane biogenesis; LPS lipid A biosynthesis. In terms of biological role, catalyzes the N-acylation of UDP-3-O-acylglucosamine using 3-hydroxyacyl-ACP as the acyl donor. Is involved in the biosynthesis of lipid A, a phosphorylated glycolipid that anchors the lipopolysaccharide to the outer membrane of the cell. This is UDP-3-O-acylglucosamine N-acyltransferase from Synechococcus elongatus (strain ATCC 33912 / PCC 7942 / FACHB-805) (Anacystis nidulans R2).